Reading from the N-terminus, the 96-residue chain is Glutamyl-tRNA(Gln) amidotransferase subunit C (96 aa).

It belongs to the GatC family. Heterotrimer of A, B and C subunits.

The enzyme catalyses L-glutamyl-tRNA(Gln) + L-glutamine + ATP + H2O = L-glutaminyl-tRNA(Gln) + L-glutamate + ADP + phosphate + H(+). It carries out the reaction L-aspartyl-tRNA(Asn) + L-glutamine + ATP + H2O = L-asparaginyl-tRNA(Asn) + L-glutamate + ADP + phosphate + 2 H(+). In terms of biological role, allows the formation of correctly charged Asn-tRNA(Asn) or Gln-tRNA(Gln) through the transamidation of misacylated Asp-tRNA(Asn) or Glu-tRNA(Gln) in organisms which lack either or both of asparaginyl-tRNA or glutaminyl-tRNA synthetases. The reaction takes place in the presence of glutamine and ATP through an activated phospho-Asp-tRNA(Asn) or phospho-Glu-tRNA(Gln). The chain is Glutamyl-tRNA(Gln) amidotransferase subunit C from Neisseria meningitidis serogroup A / serotype 4A (strain DSM 15465 / Z2491).